The following is a 1285-amino-acid chain: Dermonecrotic toxin (1285 aa).

The helical transmembrane segment at 402 to 422 (MLVPAVGIPINFALSATALGL) threads the bilayer.

The protein localises to the cytoplasm. It localises to the secreted. It is found in the host membrane. Functionally, this is a dermonecrotic toxin. This osteolytic toxin, induces bone resorption. Potent mitogen. This toxin is associated with the severe progressive form of the atrophic rhinitis, a major respiratory disease in pigs. The chain is Dermonecrotic toxin (toxA) from Pasteurella multocida.